We begin with the raw amino-acid sequence, 147 residues long: Nucleoside diphosphate kinase (147 aa).

ATP-binding residues include lysine 9, phenylalanine 57, arginine 85, threonine 91, arginine 102, and asparagine 112. The Pros-phosphohistidine intermediate role is filled by histidine 115.

The protein belongs to the NDK family. Homotetramer. Requires Mg(2+) as cofactor.

Its subcellular location is the cytoplasm. The catalysed reaction is a 2'-deoxyribonucleoside 5'-diphosphate + ATP = a 2'-deoxyribonucleoside 5'-triphosphate + ADP. It catalyses the reaction a ribonucleoside 5'-diphosphate + ATP = a ribonucleoside 5'-triphosphate + ADP. Its function is as follows. Major role in the synthesis of nucleoside triphosphates other than ATP. The ATP gamma phosphate is transferred to the NDP beta phosphate via a ping-pong mechanism, using a phosphorylated active-site intermediate. In Listeria innocua serovar 6a (strain ATCC BAA-680 / CLIP 11262), this protein is Nucleoside diphosphate kinase.